We begin with the raw amino-acid sequence, 539 residues long: Hydroxylamine reductase (539 aa).

Positions 3, 6, 13, and 19 each coordinate [4Fe-4S] cluster. Hybrid [4Fe-2O-2S] cluster-binding residues include His-240, Glu-264, Cys-308, Cys-395, Cys-423, Cys-448, Glu-482, and Lys-484. Cysteine persulfide is present on Cys-395.

This sequence belongs to the HCP family. Requires [4Fe-4S] cluster as cofactor. It depends on hybrid [4Fe-2O-2S] cluster as a cofactor.

It is found in the cytoplasm. The enzyme catalyses A + NH4(+) + H2O = hydroxylamine + AH2 + H(+). Its function is as follows. Catalyzes the reduction of hydroxylamine to form NH(3) and H(2)O. This chain is Hydroxylamine reductase, found in Thermodesulfovibrio yellowstonii (strain ATCC 51303 / DSM 11347 / YP87).